Reading from the N-terminus, the 396-residue chain is Putative nickel insertion protein (396 aa).

It belongs to the LarC family.

This Methanosarcina barkeri (strain Fusaro / DSM 804) protein is Putative nickel insertion protein.